Consider the following 451-residue polypeptide: Probable plasmid replicative DNA helicase (451 aa).

An SF4 helicase domain is found at 194 to 451 (NDSFYDGLPT…SKFSAIKKVW (258 aa)). 225–232 (ARPSIGKT) contacts ATP.

The protein belongs to the helicase family. DnaB subfamily. As to quaternary structure, homohexamer.

It carries out the reaction Couples ATP hydrolysis with the unwinding of duplex DNA at the replication fork by translocating in the 5'-3' direction. This creates two antiparallel DNA single strands (ssDNA). The leading ssDNA polymer is the template for DNA polymerase III holoenzyme which synthesizes a continuous strand.. The catalysed reaction is ATP + H2O = ADP + phosphate + H(+). Functionally, a replicative DNA helicase, it participates in initiation and elongation during DNA replication. Travels ahead of the DNA replisome, separating dsDNA into templates for DNA synthesis. A processive ATP-dependent 5'-3' DNA helicase it has DNA-dependent ATPase activity. This chain is Probable plasmid replicative DNA helicase, found in Chlamydia muridarum (strain MoPn / Nigg).